We begin with the raw amino-acid sequence, 299 residues long: Putative arsenical pump-driving ATPase 2 (299 aa).

8–15 (GKGGVGKT) contacts ATP.

It belongs to the arsA ATPase family.

It carries out the reaction arsenite(in) + ATP + H2O = arsenite(out) + ADP + phosphate + H(+). Its function is as follows. Anion-transporting ATPase. Catalyzes the extrusion of arsenite. This Aquifex aeolicus (strain VF5) protein is Putative arsenical pump-driving ATPase 2 (arsA2).